Here is a 313-residue protein sequence, read N- to C-terminus: Protein FixB (313 aa).

Residue 255–283 coordinates FAD; the sequence is LYLAVGISGQIQHMVGANGAQTIFAINKD.

Belongs to the ETF alpha-subunit/FixB family. In terms of assembly, heterodimer of FixA and FixB.

The protein operates within amine and polyamine metabolism; carnitine metabolism. Its function is as follows. Required for anaerobic carnitine reduction. May bring reductant to CaiA. The sequence is that of Protein FixB from Salmonella agona (strain SL483).